A 217-amino-acid chain; its full sequence is 3,4-dihydroxy-2-butanone 4-phosphate synthase (217 aa).

D-ribulose 5-phosphate-binding positions include 37–38, Asp42, 150–154, and Glu174; these read RE and RRGHT. A Mg(2+)-binding site is contributed by Glu38. Residue His153 coordinates Mg(2+).

The protein belongs to the DHBP synthase family. In terms of assembly, homodimer. It depends on Mg(2+) as a cofactor. Mn(2+) is required as a cofactor.

It catalyses the reaction D-ribulose 5-phosphate = (2S)-2-hydroxy-3-oxobutyl phosphate + formate + H(+). The protein operates within cofactor biosynthesis; riboflavin biosynthesis; 2-hydroxy-3-oxobutyl phosphate from D-ribulose 5-phosphate: step 1/1. In terms of biological role, catalyzes the conversion of D-ribulose 5-phosphate to formate and 3,4-dihydroxy-2-butanone 4-phosphate. The sequence is that of 3,4-dihydroxy-2-butanone 4-phosphate synthase from Aeromonas salmonicida (strain A449).